The following is a 624-amino-acid chain: Phosphomethylpyrimidine synthase (624 aa).

The interval 40–61 (VPMRKISQSDTPTNTGREKNPP) is disordered. Over residues 45–54 (ISQSDTPTNT) the composition is skewed to polar residues. Residues Asn229, Met258, Tyr287, His323, 343–345 (SRG), 384–387 (DGLR), and Glu423 contribute to the substrate site. His427 is a binding site for Zn(2+). Tyr450 is a binding site for substrate. His491 is a binding site for Zn(2+). Cys571, Cys574, and Cys579 together coordinate [4Fe-4S] cluster.

This sequence belongs to the ThiC family. In terms of assembly, homodimer. It depends on [4Fe-4S] cluster as a cofactor.

It catalyses the reaction 5-amino-1-(5-phospho-beta-D-ribosyl)imidazole + S-adenosyl-L-methionine = 4-amino-2-methyl-5-(phosphooxymethyl)pyrimidine + CO + 5'-deoxyadenosine + formate + L-methionine + 3 H(+). Its pathway is cofactor biosynthesis; thiamine diphosphate biosynthesis. In terms of biological role, catalyzes the synthesis of the hydroxymethylpyrimidine phosphate (HMP-P) moiety of thiamine from aminoimidazole ribotide (AIR) in a radical S-adenosyl-L-methionine (SAM)-dependent reaction. The chain is Phosphomethylpyrimidine synthase from Methylococcus capsulatus (strain ATCC 33009 / NCIMB 11132 / Bath).